The chain runs to 730 residues: Catalase-peroxidase (730 aa).

Residues 92 to 225 (WHSAGTYRSI…LSAVHMGLIY (134 aa)) constitute a cross-link (tryptophyl-tyrosyl-methioninium (Trp-Tyr) (with M-251)). The active-site Proton acceptor is histidine 93. The segment at residues 225 to 251 (YVNPEGPDGIPDPVASARDIRTTFRRM) is a cross-link (tryptophyl-tyrosyl-methioninium (Tyr-Met) (with W-92)). Heme b is bound at residue histidine 266.

It belongs to the peroxidase family. Peroxidase/catalase subfamily. Homodimer or homotetramer. Heme b is required as a cofactor. In terms of processing, formation of the three residue Trp-Tyr-Met cross-link is important for the catalase, but not the peroxidase activity of the enzyme.

It is found in the cytoplasm. The enzyme catalyses H2O2 + AH2 = A + 2 H2O. It carries out the reaction 2 H2O2 = O2 + 2 H2O. Functionally, bifunctional enzyme with both catalase and broad-spectrum peroxidase activity. The sequence is that of Catalase-peroxidase from Blumeria hordei (Barley powdery mildew).